Consider the following 711-residue polypeptide: MFEKPVVKTFQYGNHTVTLETGVIARQATAAVMVTMDDTAVFVSVVGKKEAVAGQDFFPLTVNYQERTYAAGKIPGGFFKREGRPSEGETLTARLIDRPIRPLFPDAFKNEVQVIATVVSVNPDVQPDIPTMIGTSAALAISGIPFNGPIGAARVGHIDGQLVLNPSQTELNASRLDLVVAGTESAVLMVESEADNLTEEEMLAAVVFGHDQQQVVINAINEFKAEVATPAWDWVAPEENTALKTKIAELAEAKLVEAYQITEKMARYDRIHEIAAEVNEALLAQDPEADTKEIHTIFHDLEKTVVRRSIIAGNPRIDGREKDMVRALDVRTGVLPRTHGSALFTRGETQALVTATLGTQRDAQIIDELTGERKDHFLLHYNFPPYCVGETGFVGSPKRREIGHGKLAKRGIAAVMPSVDEFPYTVRVVSEITESNGSSSMASVCGTSLALMDAGVPIKASVAGIAMGLVKEGDDFVVLSDILGDEDHLGDMDFKVAGTSTGVTALQMDIKIEGITKEIMQIALNQAQGARKHILSVMDEALAGARDDISEFAPRIHTMKISAEKIKDVIGKGGAVIRALTEETGTTIEIEDDGTIKIAATEGAAAKEAIRRIEEITAEVEVGRIYTGKVARLADFGAFVTVLPGKDGLVHISQIAEKRVEKVSDYLTEGQEVQVKVLEIDRQGRVRLSMKEAVEKPAEEAAAEAPAAKEE.

Mg(2+) contacts are provided by Asp487 and Asp493. In terms of domain architecture, KH spans 554 to 613 (PRIHTMKISAEKIKDVIGKGGAVIRALTEETGTTIEIEDDGTIKIAATEGAAAKEAIRRI). One can recognise an S1 motif domain in the interval 623 to 691 (GRIYTGKVAR…RQGRVRLSMK (69 aa)). The disordered stretch occupies residues 691-711 (KEAVEKPAEEAAAEAPAAKEE).

It belongs to the polyribonucleotide nucleotidyltransferase family. As to quaternary structure, component of the RNA degradosome, which is a multiprotein complex involved in RNA processing and mRNA degradation. Mg(2+) is required as a cofactor.

The protein resides in the cytoplasm. It carries out the reaction RNA(n+1) + phosphate = RNA(n) + a ribonucleoside 5'-diphosphate. Its function is as follows. Involved in mRNA degradation. Catalyzes the phosphorolysis of single-stranded polyribonucleotides processively in the 3'- to 5'-direction. In Vibrio parahaemolyticus serotype O3:K6 (strain RIMD 2210633), this protein is Polyribonucleotide nucleotidyltransferase.